The following is a 326-amino-acid chain: tRNA-modifying protein YgfZ (326 aa).

Folate is bound by residues tryptophan 27 and tryptophan 189.

It belongs to the tRNA-modifying YgfZ family.

It is found in the cytoplasm. Functionally, folate-binding protein involved in regulating the level of ATP-DnaA and in the modification of some tRNAs. It is probably a key factor in regulatory networks that act via tRNA modification, such as initiation of chromosomal replication. The sequence is that of tRNA-modifying protein YgfZ from Shigella dysenteriae serotype 1 (strain Sd197).